The following is a 150-amino-acid chain: Protein A151R (150 aa).

The protein belongs to the asfivirus A151R family. In terms of assembly, monomer. Homodimer. Interacts with protein B119L. Interacts with membrane protein E248R. The cofactor is Zn(2+).

May participate in a redox cascade for the formation of disulfide bonds in viral proteins. The protein is Protein A151R of African swine fever virus (isolate Tick/Malawi/Lil 20-1/1983) (ASFV).